A 247-amino-acid chain; its full sequence is ATP synthase subunit a, chloroplastic (247 aa).

5 helical membrane passes run 38–58, 95–115, 134–154, 199–219, and 220–240; these read QVLI…SIAV, VPFI…GALL, INTT…AGLS, LVVV…VMFL, and GLFT…AYIG.

Belongs to the ATPase A chain family. As to quaternary structure, F-type ATPases have 2 components, CF(1) - the catalytic core - and CF(0) - the membrane proton channel. CF(1) has five subunits: alpha(3), beta(3), gamma(1), delta(1), epsilon(1). CF(0) has four main subunits: a, b, b' and c.

The protein resides in the plastid. It localises to the chloroplast thylakoid membrane. Functionally, key component of the proton channel; it plays a direct role in the translocation of protons across the membrane. The sequence is that of ATP synthase subunit a, chloroplastic from Oenothera argillicola (Appalachian evening primrose).